The following is a 545-amino-acid chain: CTP synthase (545 aa).

An amidoligase domain region spans residues 1-266 (MTTRYIFVTG…DDLVVKRFGL (266 aa)). Serine 14 serves as a coordination point for CTP. Serine 14 provides a ligand contact to UTP. Residues 15 to 20 (SLGKGI) and aspartate 72 each bind ATP. Positions 72 and 140 each coordinate Mg(2+). CTP contacts are provided by residues 147–149 (DIE), 187–192 (KTKPTQ), and lysine 223. Residues 187–192 (KTKPTQ) and lysine 223 contribute to the UTP site. 239-241 (KDV) serves as a coordination point for ATP. The Glutamine amidotransferase type-1 domain occupies 291 to 542 (VIGMVGKYIE…IAAASAHQKR (252 aa)). Glycine 352 lines the L-glutamine pocket. The active-site Nucleophile; for glutamine hydrolysis is the cysteine 379. L-glutamine is bound by residues 380-383 (LGMQ), glutamate 403, and arginine 470. Residues histidine 515 and glutamate 517 contribute to the active site.

The protein belongs to the CTP synthase family. In terms of assembly, homotetramer.

The enzyme catalyses UTP + L-glutamine + ATP + H2O = CTP + L-glutamate + ADP + phosphate + 2 H(+). It catalyses the reaction L-glutamine + H2O = L-glutamate + NH4(+). It carries out the reaction UTP + NH4(+) + ATP = CTP + ADP + phosphate + 2 H(+). It participates in pyrimidine metabolism; CTP biosynthesis via de novo pathway; CTP from UDP: step 2/2. With respect to regulation, allosterically activated by GTP, when glutamine is the substrate; GTP has no effect on the reaction when ammonia is the substrate. The allosteric effector GTP functions by stabilizing the protein conformation that binds the tetrahedral intermediate(s) formed during glutamine hydrolysis. Inhibited by the product CTP, via allosteric rather than competitive inhibition. In terms of biological role, catalyzes the ATP-dependent amination of UTP to CTP with either L-glutamine or ammonia as the source of nitrogen. Regulates intracellular CTP levels through interactions with the four ribonucleotide triphosphates. The polypeptide is CTP synthase (Shewanella putrefaciens (strain CN-32 / ATCC BAA-453)).